A 507-amino-acid polypeptide reads, in one-letter code: MATLRVDEIHKILRERIEQYNRKVGIENIGRVVQVGDGIARIIGLGEIMSGELVEFAEGTRGIALNLESKNVGIVLMGDGLMIQEGSFVKATGRIAQIPVSEAYLGRVINALAKPIDGRGEIVASESRLIESPAPGIISRRSVYEPLQTGLIAIDSMIPIGRGQRELIIGDRQTGKTAVATDTILNQKGQDVICVYVAIGQRASSVAQVVTTFHEEGAMEYTIVVAEMADSPATLQYLAPYTGAALAEYFMYRERHTLIIYDDLSKQAQAYRQMSLLLRRPPGREAYPGDVFYLHSRLLERAAKLNSLLGEGSMTALPIVETQSGDVSAYIPTNVISITDGQIFLSADLFNAGIRPAINVGISVSRVGSAAQIKAMKQVAGKSKLELAQFAELQAFAQFASALDKTSQNQLARGRRLRELLKQSQANPLPVEEQIATIYIGTRGYLDSLEIGQVKKFLDELRKHLKDTKPQFQEIISSSKTFTEEAEILLKEAIQEQLERFSLQEQT.

Residue 170 to 177 (GDRQTGKT) participates in ATP binding.

The protein belongs to the ATPase alpha/beta chains family. As to quaternary structure, F-type ATPases have 2 components, CF(1) - the catalytic core - and CF(0) - the membrane proton channel. CF(1) has five subunits: alpha(3), beta(3), gamma(1), delta(1), epsilon(1). CF(0) has four main subunits: a, b, b' and c.

The protein resides in the plastid. The protein localises to the chloroplast thylakoid membrane. It catalyses the reaction ATP + H2O + 4 H(+)(in) = ADP + phosphate + 5 H(+)(out). Produces ATP from ADP in the presence of a proton gradient across the membrane. The alpha chain is a regulatory subunit. The polypeptide is ATP synthase subunit alpha, chloroplastic (Oryza nivara (Indian wild rice)).